The following is a 365-amino-acid chain: Protein mab-21-like (365 aa).

It belongs to the mab-21 family.

The chain is Protein mab-21-like from Aedes aegypti (Yellowfever mosquito).